A 304-amino-acid polypeptide reads, in one-letter code: Uricase (304 aa).

Residue Ala2 is modified to N-acetylalanine. N6-acetyllysine; alternate is present on residues Lys10 and Lys23. N6-succinyllysine; alternate is present on residues Lys10 and Lys23. Lys23 acts as the Charge relay system in catalysis. An N6-acetyllysine mark is found at Lys27 and Lys36. Phosphoserine is present on residues Ser39 and Ser63. Catalysis depends on Thr68, which acts as the Charge relay system. Urate is bound by residues Thr68 and Asp69. Residues Lys118, Lys122, and Lys164 each carry the N6-acetyllysine modification. Phe170 is a urate binding site. Residues Lys175 and Lys185 each carry the N6-acetyllysine modification. Arg187 contributes to the urate binding site. N6-acetyllysine; alternate is present on residues Lys221 and Lys228. Lys221 and Lys228 each carry N6-succinyllysine; alternate. A Phosphoserine modification is found at Ser232. 3 residues coordinate urate: Val235, Gln236, and Asn262. The active-site Charge relay system is the His264. At Lys278 the chain carries N6-acetyllysine. Tyr289 is subject to Phosphotyrosine. The Microbody targeting signal motif lies at 302 to 304 (SRL).

The protein belongs to the uricase family. In terms of assembly, homotetramer.

Its subcellular location is the peroxisome. It catalyses the reaction urate + O2 + H2O = 5-hydroxyisourate + H2O2. It functions in the pathway purine metabolism; urate degradation; (S)-allantoin from urate: step 1/3. Functionally, catalyzes the oxidation of uric acid to 5-hydroxyisourate, which is further processed to form (S)-allantoin. The polypeptide is Uricase (UOX) (Bos taurus (Bovine)).